The following is a 713-amino-acid chain: Polyribonucleotide nucleotidyltransferase (713 aa).

Aspartate 488 and aspartate 494 together coordinate Mg(2+). Positions 555-614 (PQMEIIKVPTDKIRDVIGSGGKVIRGIVDETGAKVNIDDDGTVQISAMDRKSIDAAIKMI) constitute a KH domain. Positions 624 to 692 (GEIYEGKVVS…ERGKVRLSMK (69 aa)) constitute an S1 motif domain.

This sequence belongs to the polyribonucleotide nucleotidyltransferase family. It depends on Mg(2+) as a cofactor.

Its subcellular location is the cytoplasm. The enzyme catalyses RNA(n+1) + phosphate = RNA(n) + a ribonucleoside 5'-diphosphate. Functionally, involved in mRNA degradation. Catalyzes the phosphorolysis of single-stranded polyribonucleotides processively in the 3'- to 5'-direction. The chain is Polyribonucleotide nucleotidyltransferase from Hyphomonas neptunium (strain ATCC 15444).